The following is a 398-amino-acid chain: 1-deoxy-D-xylulose 5-phosphate reductoisomerase (398 aa).

Thr-10, Gly-11, Ser-12, Ile-13, Gly-36, Lys-37, Asn-38, and Asn-124 together coordinate NADPH. Lys-125 lines the 1-deoxy-D-xylulose 5-phosphate pocket. Glu-126 contacts NADPH. Residue Asp-150 participates in Mn(2+) binding. The 1-deoxy-D-xylulose 5-phosphate site is built by Ser-151, Glu-152, Ser-186, and His-209. Glu-152 contributes to the Mn(2+) binding site. Gly-215 is an NADPH binding site. Positions 222, 227, 228, and 231 each coordinate 1-deoxy-D-xylulose 5-phosphate. Glu-231 contacts Mn(2+).

The protein belongs to the DXR family. In terms of assembly, homodimer. It depends on Mg(2+) as a cofactor. Requires Mn(2+) as cofactor.

It catalyses the reaction 2-C-methyl-D-erythritol 4-phosphate + NADP(+) = 1-deoxy-D-xylulose 5-phosphate + NADPH + H(+). It participates in isoprenoid biosynthesis; isopentenyl diphosphate biosynthesis via DXP pathway; isopentenyl diphosphate from 1-deoxy-D-xylulose 5-phosphate: step 1/6. Catalyzes the NADPH-dependent rearrangement and reduction of 1-deoxy-D-xylulose-5-phosphate (DXP) to 2-C-methyl-D-erythritol 4-phosphate (MEP). The polypeptide is 1-deoxy-D-xylulose 5-phosphate reductoisomerase (Escherichia coli O157:H7).